The primary structure comprises 262 residues: Putative carbamate hydrolase RutD (262 aa).

This sequence belongs to the AB hydrolase superfamily. Hydrolase RutD family.

The enzyme catalyses carbamate + 2 H(+) = NH4(+) + CO2. Functionally, involved in pyrimidine catabolism. May facilitate the hydrolysis of carbamate, a reaction that can also occur spontaneously. In Rhizobium rhizogenes (strain K84 / ATCC BAA-868) (Agrobacterium radiobacter), this protein is Putative carbamate hydrolase RutD.